Here is a 151-residue protein sequence, read N- to C-terminus: Phospholipase A2 inhibitor BjussuMIP (151 aa).

Residues 1-4 form the signal peptide; sequence LANG. Positions 31–146 constitute a C-type lectin domain; sequence LKYAFLTVHK…CDENLLVVCE (116 aa). Disulfide bonds link Cys68–Cys145 and Cys123–Cys137. An N-linked (GlcNAc...) asparagine glycan is attached at Asn107.

Belongs to the alpha-type phospholipase A2 inhibitor family. In terms of assembly, oligomer. As to expression, expressed by the liver.

The protein localises to the secreted. Functionally, inhibits enzymatic, anticoagulant, edema formation, myotoxicity activities induced by snakes phospholipase A2. Is oligomeric, but it is probable that each of its subunits can bind and inactive a PLA2 molecule. The sequence is that of Phospholipase A2 inhibitor BjussuMIP from Bothrops jararacussu (Jararacussu).